We begin with the raw amino-acid sequence, 693 residues long: Polyribonucleotide nucleotidyltransferase (693 aa).

Mg(2+)-binding residues include D489 and D495. The region spanning 556–615 (PQIHVMNINPAKIKDVVGRGGATVKGIVEKTGAQIDTSDSGEVKVFAKDKKSMDMAVAMI) is the KH domain. The region spanning 625 to 693 (GQVYKGKIVK…GRVKLSLVAR (69 aa)) is the S1 motif domain.

The protein belongs to the polyribonucleotide nucleotidyltransferase family. As to quaternary structure, component of the RNA degradosome, which is a multiprotein complex involved in RNA processing and mRNA degradation. It depends on Mg(2+) as a cofactor.

It localises to the cytoplasm. The enzyme catalyses RNA(n+1) + phosphate = RNA(n) + a ribonucleoside 5'-diphosphate. Functionally, involved in mRNA degradation. Catalyzes the phosphorolysis of single-stranded polyribonucleotides processively in the 3'- to 5'-direction. The sequence is that of Polyribonucleotide nucleotidyltransferase from Francisella tularensis subsp. holarctica (strain FTNF002-00 / FTA).